The following is a 286-amino-acid chain: DNA-directed RNA polymerase subunit Rpo3 (286 aa).

It belongs to the archaeal Rpo3/eukaryotic RPB3 RNA polymerase subunit family. In terms of assembly, part of the RNA polymerase complex.

The protein resides in the cytoplasm. It carries out the reaction RNA(n) + a ribonucleoside 5'-triphosphate = RNA(n+1) + diphosphate. In terms of biological role, DNA-dependent RNA polymerase (RNAP) catalyzes the transcription of DNA into RNA using the four ribonucleoside triphosphates as substrates. In Aeropyrum pernix (strain ATCC 700893 / DSM 11879 / JCM 9820 / NBRC 100138 / K1), this protein is DNA-directed RNA polymerase subunit Rpo3.